Consider the following 295-residue polypeptide: GTPase Era (295 aa).

Positions 5–172 (YCGYAAIIGR…EQAVHQLMPE (168 aa)) constitute an Era-type G domain. Residues 13-20 (GRPNVGKS) are G1. 13 to 20 (GRPNVGKS) lines the GTP pocket. The G2 stretch occupies residues 39–43 (QTTRY). Positions 60-63 (DTPG) are G3. Residues 60–64 (DTPGL) and 121–124 (NKVD) contribute to the GTP site. The G4 stretch occupies residues 121-124 (NKVD). The segment at 151–153 (LSA) is G5. A KH type-2 domain is found at 203-279 (LGQEIPYSLA…FLQLWVKVKS (77 aa)).

Belongs to the TRAFAC class TrmE-Era-EngA-EngB-Septin-like GTPase superfamily. Era GTPase family. In terms of assembly, monomer.

The protein localises to the cytoplasm. It is found in the cell inner membrane. Its function is as follows. An essential GTPase that binds both GDP and GTP, with rapid nucleotide exchange. Plays a role in 16S rRNA processing and 30S ribosomal subunit biogenesis and possibly also in cell cycle regulation and energy metabolism. The chain is GTPase Era from Coxiella burnetii (strain RSA 331 / Henzerling II).